The chain runs to 431 residues: Hydroxylamine reductase (431 aa).

Positions 5, 8, 17, and 23 each coordinate [4Fe-4S] cluster. Positions 131, 155, 199, 286, 314, 339, 373, and 375 each coordinate hybrid [4Fe-2O-2S] cluster. Cysteine persulfide is present on C286.

The protein belongs to the HCP family. The cofactor is [4Fe-4S] cluster. Hybrid [4Fe-2O-2S] cluster serves as cofactor.

It is found in the cytoplasm. It carries out the reaction A + NH4(+) + H2O = hydroxylamine + AH2 + H(+). In terms of biological role, catalyzes the reduction of hydroxylamine to form NH(3) and H(2)O. In Thermotoga maritima (strain ATCC 43589 / DSM 3109 / JCM 10099 / NBRC 100826 / MSB8), this protein is Hydroxylamine reductase.